The sequence spans 307 residues: Pantothenate kinase (307 aa).

87-94 contributes to the ATP binding site; it reads GSVAVGKS.

Belongs to the prokaryotic pantothenate kinase family.

Its subcellular location is the cytoplasm. It carries out the reaction (R)-pantothenate + ATP = (R)-4'-phosphopantothenate + ADP + H(+). The protein operates within cofactor biosynthesis; coenzyme A biosynthesis; CoA from (R)-pantothenate: step 1/5. This Vibrio vulnificus (strain CMCP6) protein is Pantothenate kinase.